The primary structure comprises 391 residues: Fructose-bisphosphate aldolase 3, chloroplastic (391 aa).

Residues 1–40 constitute a chloroplast transit peptide; it reads MASASFVKPNTLSSPWIGQRSFAHTSASSSPPPRVSFAIR. Arg-88 lines the substrate pocket. Phosphoserine is present on Ser-150. Position 178 (Lys-178) interacts with substrate. At Ser-208 the chain carries Phosphoserine. Residue Glu-218 is the Proton acceptor of the active site. The active-site Schiff-base intermediate with dihydroxyacetone-P is Lys-260. 302–304 contributes to the substrate binding site; it reads SGG. Lys-387 carries the post-translational modification N6,N6,N6-trimethyllysine.

It belongs to the class I fructose-bisphosphate aldolase family. As to quaternary structure, homotetramer. Can be trimethylated at Lys-387 by LSMT-L, but the trimethylation has no effect in vitro. Post-translationally, S-glutathionylated. As to expression, expressed in roots, and at low levels in rosettes leaves, cauline leaves, stems and flowers.

The protein resides in the plastid. It is found in the chloroplast. The protein localises to the plastoglobule. It carries out the reaction beta-D-fructose 1,6-bisphosphate = D-glyceraldehyde 3-phosphate + dihydroxyacetone phosphate. The protein operates within carbohydrate degradation; glycolysis; D-glyceraldehyde 3-phosphate and glycerone phosphate from D-glucose: step 4/4. In terms of biological role, plays a key role in glycolysis and gluconeogenesis. This Arabidopsis thaliana (Mouse-ear cress) protein is Fructose-bisphosphate aldolase 3, chloroplastic.